The sequence spans 739 residues: Phosphoribosylformylglycinamidine synthase subunit PurL (739 aa).

Residue His-54 is part of the active site. ATP-binding residues include Tyr-57 and Lys-96. Glu-98 is a binding site for Mg(2+). Residues 99 to 102 (SHNH) and Arg-121 contribute to the substrate site. His-100 serves as the catalytic Proton acceptor. Mg(2+) is bound at residue Asp-122. Residue Gln-245 coordinates substrate. Asp-273 lines the Mg(2+) pocket. 317 to 319 (ESQ) lines the substrate pocket. Positions 500 and 537 each coordinate ATP. Mg(2+) is bound at residue Asn-538. Residue Ser-540 participates in substrate binding.

Belongs to the FGAMS family. As to quaternary structure, monomer. Part of the FGAM synthase complex composed of 1 PurL, 1 PurQ and 2 PurS subunits.

It localises to the cytoplasm. The enzyme catalyses N(2)-formyl-N(1)-(5-phospho-beta-D-ribosyl)glycinamide + L-glutamine + ATP + H2O = 2-formamido-N(1)-(5-O-phospho-beta-D-ribosyl)acetamidine + L-glutamate + ADP + phosphate + H(+). The protein operates within purine metabolism; IMP biosynthesis via de novo pathway; 5-amino-1-(5-phospho-D-ribosyl)imidazole from N(2)-formyl-N(1)-(5-phospho-D-ribosyl)glycinamide: step 1/2. Its function is as follows. Part of the phosphoribosylformylglycinamidine synthase complex involved in the purines biosynthetic pathway. Catalyzes the ATP-dependent conversion of formylglycinamide ribonucleotide (FGAR) and glutamine to yield formylglycinamidine ribonucleotide (FGAM) and glutamate. The FGAM synthase complex is composed of three subunits. PurQ produces an ammonia molecule by converting glutamine to glutamate. PurL transfers the ammonia molecule to FGAR to form FGAM in an ATP-dependent manner. PurS interacts with PurQ and PurL and is thought to assist in the transfer of the ammonia molecule from PurQ to PurL. In Bacillus cereus (strain Q1), this protein is Phosphoribosylformylglycinamidine synthase subunit PurL.